We begin with the raw amino-acid sequence, 842 residues long: Protein P (842 aa).

A terminal protein domain (TP) region spans residues 1–177 (MPLSYQHFRR…FCGSPYSWEQ (177 aa)). A spacer region spans residues 178–345 (ELHHGAFLDG…YCLTHLVNLL (168 aa)). The disordered stretch occupies residues 205-271 (SRPPVGSSIQ…RHAKNIASRP (67 aa)). Residues 223–239 (GPQSQQRPLDGSQQGRS) are compositionally biased toward polar residues. The tract at residues 346–689 (EDWGPCTEHG…YLNLYPVARQ (344 aa)) is polymerase/reverse transcriptase domain (RT). One can recognise a Reverse transcriptase domain in the interval 356–599 (KHHIRIPRTP…YSLNFMGYVI (244 aa)). Aspartate 428, aspartate 550, and aspartate 551 together coordinate Mg(2+).

The protein belongs to the hepadnaviridae P protein family.

It carries out the reaction DNA(n) + a 2'-deoxyribonucleoside 5'-triphosphate = DNA(n+1) + diphosphate. The enzyme catalyses Endonucleolytic cleavage to 5'-phosphomonoester.. Activated by host HSP70 and HSP40 in vitro to be able to bind the epsilon loop of the pgRNA. Because deletion of the RNase H region renders the protein partly chaperone-independent, the chaperones may be needed indirectly to relieve occlusion of the RNA-binding site by this domain. Inhibited by several reverse-transcriptase inhibitors: Lamivudine, Adefovir and Entecavir. In terms of biological role, multifunctional enzyme that converts the viral RNA genome into dsDNA in viral cytoplasmic capsids. This enzyme displays a DNA polymerase activity that can copy either DNA or RNA templates, and a ribonuclease H (RNase H) activity that cleaves the RNA strand of RNA-DNA heteroduplexes in a partially processive 3'- to 5'-endonucleasic mode. Neo-synthesized pregenomic RNA (pgRNA) are encapsidated together with the P protein, and reverse-transcribed inside the nucleocapsid. Initiation of reverse-transcription occurs first by binding the epsilon loop on the pgRNA genome, and is initiated by protein priming, thereby the 5'-end of (-)DNA is covalently linked to P protein. Partial (+)DNA is synthesized from the (-)DNA template and generates the relaxed circular DNA (RC-DNA) genome. After budding and infection, the RC-DNA migrates in the nucleus, and is converted into a plasmid-like covalently closed circular DNA (cccDNA). The activity of P protein does not seem to be necessary for cccDNA generation, and is presumably released from (+)DNA by host nuclear DNA repair machinery. This Hepatitis B virus genotype E subtype ayw4 (isolate Kou) (HBV-E) protein is Protein P.